We begin with the raw amino-acid sequence, 124 residues long: Ribonuclease pancreatic (124 aa).

Over residues 1-13 (KESAAAKFERQHM) the composition is skewed to basic and acidic residues. The segment at 1 to 24 (KESAAAKFERQHMDPSMSSASSSN) is disordered. Residues lysine 7 and arginine 10 each coordinate substrate. The Proton acceptor role is filled by histidine 12. Cystine bridges form between cysteine 26/cysteine 84, cysteine 40/cysteine 95, cysteine 58/cysteine 110, and cysteine 65/cysteine 72. Substrate-binding positions include 41–45 (KPVNT), lysine 66, and arginine 85. Residue histidine 119 is the Proton donor of the active site.

This sequence belongs to the pancreatic ribonuclease family. Monomer. Interacts with and forms tight 1:1 complexes with RNH1. Dimerization of two such complexes may occur. Interaction with RNH1 inhibits this protein. As to expression, pancreas.

It is found in the secreted. The enzyme catalyses an [RNA] containing cytidine + H2O = an [RNA]-3'-cytidine-3'-phosphate + a 5'-hydroxy-ribonucleotide-3'-[RNA].. It carries out the reaction an [RNA] containing uridine + H2O = an [RNA]-3'-uridine-3'-phosphate + a 5'-hydroxy-ribonucleotide-3'-[RNA].. Endonuclease that catalyzes the cleavage of RNA on the 3' side of pyrimidine nucleotides. Acts on single-stranded and double-stranded RNA. This chain is Ribonuclease pancreatic (RNASE1), found in Dama dama (Fallow deer).